A 188-amino-acid polypeptide reads, in one-letter code: uncharacterized protein (188 aa).

A signal peptide spans 1–23 (MVRPKLAFYILPLLLAFLGSALG). Residue Asn74 is glycosylated (N-linked (GlcNAc...) asparagine).

This is an uncharacterized protein from Mus musculus (Mouse).